The following is a 290-amino-acid chain: Ribosomal RNA small subunit methyltransferase A (290 aa).

Positions 27, 29, 54, 75, 100, and 125 each coordinate S-adenosyl-L-methionine.

This sequence belongs to the class I-like SAM-binding methyltransferase superfamily. rRNA adenine N(6)-methyltransferase family. RsmA subfamily.

The protein resides in the cytoplasm. The catalysed reaction is adenosine(1518)/adenosine(1519) in 16S rRNA + 4 S-adenosyl-L-methionine = N(6)-dimethyladenosine(1518)/N(6)-dimethyladenosine(1519) in 16S rRNA + 4 S-adenosyl-L-homocysteine + 4 H(+). Its function is as follows. Specifically dimethylates two adjacent adenosines (A1518 and A1519) in the loop of a conserved hairpin near the 3'-end of 16S rRNA in the 30S particle. May play a critical role in biogenesis of 30S subunits. This chain is Ribosomal RNA small subunit methyltransferase A, found in Streptococcus pneumoniae (strain ATCC BAA-255 / R6).